The following is a 453-amino-acid chain: Ribulose bisphosphate carboxylase large chain (453 aa).

Residues 1–2 (MS) constitute a propeptide that is removed on maturation. N-acetylproline is present on Pro3. Residue Lys14 is modified to N6,N6,N6-trimethyllysine. Substrate-binding residues include Asn123 and Thr173. Lys175 (proton acceptor) is an active-site residue. Residue Lys177 coordinates substrate. Residues Lys201, Asp203, and Glu204 each contribute to the Mg(2+) site. Residue Lys201 is modified to N6-carboxylysine. The Proton acceptor role is filled by His294. Substrate is bound by residues Arg295, His327, and Ser379.

The protein belongs to the RuBisCO large chain family. Type I subfamily. Heterohexadecamer of 8 large chains and 8 small chains; disulfide-linked. The disulfide link is formed within the large subunit homodimers. The cofactor is Mg(2+). In terms of processing, the disulfide bond which can form in the large chain dimeric partners within the hexadecamer appears to be associated with oxidative stress and protein turnover.

Its subcellular location is the plastid. It is found in the chloroplast. The catalysed reaction is 2 (2R)-3-phosphoglycerate + 2 H(+) = D-ribulose 1,5-bisphosphate + CO2 + H2O. The enzyme catalyses D-ribulose 1,5-bisphosphate + O2 = 2-phosphoglycolate + (2R)-3-phosphoglycerate + 2 H(+). In terms of biological role, ruBisCO catalyzes two reactions: the carboxylation of D-ribulose 1,5-bisphosphate, the primary event in carbon dioxide fixation, as well as the oxidative fragmentation of the pentose substrate in the photorespiration process. Both reactions occur simultaneously and in competition at the same active site. The protein is Ribulose bisphosphate carboxylase large chain of Galium lucidum.